The primary structure comprises 120 residues: Large ribosomal subunit protein bL19 (120 aa).

This sequence belongs to the bacterial ribosomal protein bL19 family.

Functionally, this protein is located at the 30S-50S ribosomal subunit interface and may play a role in the structure and function of the aminoacyl-tRNA binding site. This chain is Large ribosomal subunit protein bL19, found in Thermosynechococcus vestitus (strain NIES-2133 / IAM M-273 / BP-1).